Here is a 302-residue protein sequence, read N- to C-terminus: 4-hydroxy-tetrahydrodipicolinate synthase (302 aa).

Residue Thr-56 coordinates pyruvate. The active-site Proton donor/acceptor is the Tyr-145. The Schiff-base intermediate with substrate role is filled by Lys-173. Pyruvate is bound at residue Val-215.

This sequence belongs to the DapA family. Homotetramer; dimer of dimers.

The protein localises to the cytoplasm. It carries out the reaction L-aspartate 4-semialdehyde + pyruvate = (2S,4S)-4-hydroxy-2,3,4,5-tetrahydrodipicolinate + H2O + H(+). The protein operates within amino-acid biosynthesis; L-lysine biosynthesis via DAP pathway; (S)-tetrahydrodipicolinate from L-aspartate: step 3/4. Catalyzes the condensation of (S)-aspartate-beta-semialdehyde [(S)-ASA] and pyruvate to 4-hydroxy-tetrahydrodipicolinate (HTPA). This is 4-hydroxy-tetrahydrodipicolinate synthase from Prochlorococcus marinus (strain MIT 9515).